Reading from the N-terminus, the 760-residue chain is General transcription and DNA repair factor IIH helicase subunit XPD (760 aa).

In terms of domain architecture, Helicase ATP-binding spans 7–283; it reads GLLVYFPYDY…KETDEQRLRD (277 aa). 42–49 contributes to the ATP binding site; the sequence is MPSGTGKT. Residues Cys116, Cys134, Cys155, and Cys190 each contribute to the [4Fe-4S] cluster site. A DEAH box motif is present at residues 234 to 237; the sequence is DEAH. Residues 438–637 are mediates interaction with MMS19; it reads MDASLAIKPV…TQSRILKARL (200 aa). Residues 682–695 carry the Nuclear localization signal motif; sequence KRFARADKRGKLPR.

Belongs to the helicase family. RAD3/XPD subfamily. In terms of assembly, component of the 7-subunit TFIIH core complex composed of XPB/ERCC3, XPD/ERCC2, GTF2H1, GTF2H2, GTF2H3, GTF2H4 and GTF2H5, which is active in NER. The core complex associates with the 3-subunit CDK-activating kinase (CAK) module composed of CCNH/cyclin H, CDK7 and MNAT1 to form the 10-subunit holoenzyme (holo-TFIIH) active in transcription. The interaction with GTF2H2 results in the stimulation of the 5'--&gt;3' helicase activity. Component of the MMXD complex, which includes CIAO1, ERCC2, CIAO2B, MMS19 and SLC25A5. Interacts with CIAO1 and CIAO2B; the interaction WITH CIAO2B is direct. Interacts with ATF7IP. Interacts directly with MMS19. Part of TBP-based Pol II pre-initiation complex (PIC), in which Pol II core assembles with general transcription factors and other specific initiation factors including GTF2E1, GTF2E2, GTF2F1, GTF2F2, TCEA1, ERCC2, ERCC3, GTF2H2, GTF2H3, GTF2H4, GTF2H5, GTF2A1, GTF2A2, GTF2B and TBP; this large multi-subunit PIC complex mediates DNA unwinding and targets Pol II core to the transcription start site where the first phosphodiester bond forms. It depends on Mg(2+) as a cofactor. [4Fe-4S] cluster serves as cofactor. ISGylated.

Its subcellular location is the nucleus. It localises to the cytoplasm. It is found in the cytoskeleton. The protein resides in the spindle. The catalysed reaction is Couples ATP hydrolysis with the unwinding of duplex DNA at the replication fork by translocating in the 5'-3' direction. This creates two antiparallel DNA single strands (ssDNA). The leading ssDNA polymer is the template for DNA polymerase III holoenzyme which synthesizes a continuous strand.. The enzyme catalyses ATP + H2O = ADP + phosphate + H(+). In terms of biological role, ATP-dependent 5'-3' DNA helicase. Component of the general transcription and DNA repair factor IIH (TFIIH) core complex which is involved in general and transcription-coupled nucleotide excision repair (NER) of damaged DNA. When complexed to CDK-activating kinase (CAK), involved in transcription by RNA polymerase II. In NER, TFIIH acts by opening DNA around the lesion to allow the excision of the damaged oligonucleotide and its replacement by a new DNA fragment. The ATP-dependent helicase activity of XPD/ERCC2 is required for DNA opening. In transcription, TFIIH has an essential role in transcription initiation. When the pre-initiation complex (PIC) has been established, TFIIH is required for promoter opening and promoter escape. Phosphorylation of the C-terminal tail (CTD) of the largest subunit of RNA polymerase II by the kinase module CAK controls the initiation of transcription. XPD/ERCC2 acts by forming a bridge between CAK and the core-TFIIH complex. Involved in the regulation of vitamin-D receptor activity. As part of the mitotic spindle-associated MMXD complex it plays a role in chromosome segregation. Might have a role in aging process and could play a causative role in the generation of skin cancers. This Cricetulus griseus (Chinese hamster) protein is General transcription and DNA repair factor IIH helicase subunit XPD.